We begin with the raw amino-acid sequence, 339 residues long: MTPKVMIILGSGSDIAIAEKSMKILEKLEIPYSLKIASAHRTPDLVRELVVQGTNAGIKVFIGIAGLAAHLPGAIAAYTHKPVIGVPVDVKVSGLDALYSSVQMPYPSPVATVGIDRGDNGAILAARILGLYDEEIRKKVLESKEGYRQKVIKNNEEIVQKIDNPHITNDFLRIKNLELNETTEEFNGSYINKNAEVVIIVGRHTDLITGKKVSVTLDRLKIPHDMQVICPIRSGKKFRAYVNTMKNAKIFIGINSNSSQVSGGLVGLTEKPVIGVPCENELGNNYLLSTVNMPPGVPVATVGVNNGRNAAVLSGEILSINNPVLLELLEKLKNKKINI.

Ser11, Asp14, and Arg41 together coordinate substrate.

This sequence belongs to the AIR carboxylase family. Class I subfamily.

The enzyme catalyses 5-carboxyamino-1-(5-phospho-D-ribosyl)imidazole + H(+) = 5-amino-1-(5-phospho-D-ribosyl)imidazole-4-carboxylate. It participates in purine metabolism; IMP biosynthesis via de novo pathway; 5-amino-1-(5-phospho-D-ribosyl)imidazole-4-carboxylate from 5-amino-1-(5-phospho-D-ribosyl)imidazole (N5-CAIR route): step 2/2. Catalyzes the conversion of N5-carboxyaminoimidazole ribonucleotide (N5-CAIR) to 4-carboxy-5-aminoimidazole ribonucleotide (CAIR). The chain is Probable N5-carboxyaminoimidazole ribonucleotide mutase from Methanobrevibacter smithii.